Consider the following 215-residue polypeptide: Transmembrane protein 267 (215 aa).

The next 3 helical transmembrane spans lie at 77–97 (FGEIILAGFLASVIDIDHFLL), 114–134 (FLHCSTVIPTVVLTLKFTMHF), and 178–198 (FWLYVIITSSLPHICSFVMYF).

Its subcellular location is the membrane. This Bos taurus (Bovine) protein is Transmembrane protein 267 (TMEM267).